Reading from the N-terminus, the 80-residue chain is Putative defensin-like protein 15 (80 aa).

Positions 1–29 (MAKFASIITFIYAALVLFAAFEVPTMVEA) are cleaved as a signal peptide. Gln-30 is subject to Pyrrolidone carboxylic acid. 4 cysteine pairs are disulfide-bonded: Cys-33-Cys-80, Cys-44-Cys-65, Cys-50-Cys-74, and Cys-54-Cys-76.

Belongs to the DEFL family.

The protein localises to the secreted. Its function is as follows. Confers broad-spectrum resistance to pathogens. The chain is Putative defensin-like protein 15 (PDF1.2B) from Arabidopsis thaliana (Mouse-ear cress).